A 149-amino-acid polypeptide reads, in one-letter code: MHRIDVKILDDRLRTHEPAYATPGAAGLDLRACLNAPVTLHPGETTLIPSGLAIHLADPGLAAMVLPRSGLGHKHGIVLGNLVGLIDSDYQGQIFVSAWNRGRETFTVQPMERIAQLVVVPVLQVGFNIVDEFPQSDRGAAGFGSTGKH.

Substrate is bound by residues 68 to 70, N81, and 85 to 87; these read RSG and LID.

Belongs to the dUTPase family. Requires Mg(2+) as cofactor.

The enzyme catalyses dUTP + H2O = dUMP + diphosphate + H(+). The protein operates within pyrimidine metabolism; dUMP biosynthesis; dUMP from dCTP (dUTP route): step 2/2. Its function is as follows. This enzyme is involved in nucleotide metabolism: it produces dUMP, the immediate precursor of thymidine nucleotides and it decreases the intracellular concentration of dUTP so that uracil cannot be incorporated into DNA. The sequence is that of Deoxyuridine 5'-triphosphate nucleotidohydrolase from Aromatoleum aromaticum (strain DSM 19018 / LMG 30748 / EbN1) (Azoarcus sp. (strain EbN1)).